The sequence spans 1354 residues: Rho-associated protein kinase 1 (1354 aa).

An N-acetylserine modification is found at Ser-2. Positions 76–338 (YEVVKVIGRG…VEEIKRHLFF (263 aa)) constitute a Protein kinase domain. ATP-binding positions include 82 to 90 (IGRGAFGEV) and Lys-105. Catalysis depends on Asp-198, which acts as the Proton acceptor. The AGC-kinase C-terminal domain occupies 341–409 (DQWAWETLRD…YSNRRYLPSA (69 aa)). Residues 368-727 (FDDLEEDKGD…KKLKEEREAR (360 aa)) are interaction with FHOD1. Residues 422 to 692 (KSLQESLQKT…RLEQEVNEHK (271 aa)) adopt a coiled-coil conformation. Residues 479–556 (SAVSQIEKEK…LEEANDLLRT (78 aa)) enclose the REM-1 domain. An SHROOM3 binding region spans residues 707–946 (EAKSVAMCEM…TVSRLEETNS (240 aa)). One can recognise a RhoBD domain in the interval 949–1015 (TKDIEMLRKE…LAEIMNRKDF (67 aa)). Positions 998-1010 (LKTQAVNKLAEIM) are RHOA binding. Residues 1011 to 1102 (NRKDFKIDRK…KLLDLSDSTS (92 aa)) adopt a coiled-coil conformation. A phosphoserine mark is found at Ser-1105 and Ser-1108. An auto-inhibitory region spans residues 1115–1354 (NLPESRIEGW…VVKNTSGKTS (240 aa)). Residues 1118–1317 (ESRIEGWLSV…WVTHLVKKIP (200 aa)) form the PH domain. Residues 1228–1283 (GHEFIPTLYHFPANCEACAKPLWHVFKPPPALECRRCHVKCHRDHLDKKEDLISPC) form a Phorbol-ester/DAG-type zinc finger. Ser-1328 bears the Phosphoserine mark. Residues 1333–1354 (STRSTANQSFRKVVKNTSGKTS) are disordered.

This sequence belongs to the protein kinase superfamily. AGC Ser/Thr protein kinase family. Homodimer. Interacts with RHOA (activated by GTP), RHOB, RHOC, GEM, MYLC2B, RHOE, PPP1R12A, LIMK1, LIMK2, TSG101, CHORDC1, DAPK3, PFN1 and JIP3. Interacts with FHOD1 in a Src-dependent manner. Interacts with PTEN. Interacts with ITGB1BP1 (via N-terminus and PTB domain). Interacts with SHROOM3. Mg(2+) is required as a cofactor. Post-translationally, autophosphorylated on serine and threonine residues. Cleaved by caspase-3 during apoptosis. This leads to constitutive activation of the kinase and membrane blebbing. Highly expressed in brain, heart, lung, liver, stomach, spleen, kidney, testis, muscle, embryo and placenta.

The protein resides in the cytoplasm. The protein localises to the cytoskeleton. Its subcellular location is the microtubule organizing center. It localises to the centrosome. It is found in the centriole. The protein resides in the golgi apparatus membrane. The protein localises to the cell projection. Its subcellular location is the bleb. It localises to the cell membrane. It is found in the lamellipodium. The protein resides in the ruffle. The enzyme catalyses L-seryl-[protein] + ATP = O-phospho-L-seryl-[protein] + ADP + H(+). The catalysed reaction is L-threonyl-[protein] + ATP = O-phospho-L-threonyl-[protein] + ADP + H(+). Its activity is regulated as follows. Activated by RHOA binding. Inhibited by Y-27632. Its function is as follows. Protein kinase which is a key regulator of the actin cytoskeleton and cell polarity. Involved in regulation of smooth muscle contraction, actin cytoskeleton organization, stress fiber and focal adhesion formation, neurite retraction, cell adhesion and motility via phosphorylation of DAPK3, GFAP, LIMK1, LIMK2, MYL9/MLC2, TPPP, PFN1 and PPP1R12A. Phosphorylates FHOD1 and acts synergistically with it to promote SRC-dependent non-apoptotic plasma membrane blebbing. Phosphorylates JIP3 and regulates the recruitment of JNK to JIP3 upon UVB-induced stress. Acts as a suppressor of inflammatory cell migration by regulating PTEN phosphorylation and stability. Acts as a negative regulator of VEGF-induced angiogenic endothelial cell activation. Required for centrosome positioning and centrosome-dependent exit from mitosis. Plays a role in terminal erythroid differentiation. Inhibits podocyte motility via regulation of actin cytoskeletal dynamics and phosphorylation of CFL1. Promotes keratinocyte terminal differentiation. Involved in osteoblast compaction through the fibronectin fibrillogenesis cell-mediated matrix assembly process, essential for osteoblast mineralization. May regulate closure of the eyelids and ventral body wall by inducing the assembly of actomyosin bundles. This Mus musculus (Mouse) protein is Rho-associated protein kinase 1 (Rock1).